The sequence spans 273 residues: Undecaprenyl-diphosphatase (273 aa).

A run of 6 helical transmembrane segments spans residues 46–63 (LFEV…CWEY), 83–103 (FVLN…LAGK), 109–129 (LFNS…ILWV), 184–204 (ATEF…AYDL), 218–238 (AFGI…RGLL), and 249–269 (FAWY…YGLV).

Belongs to the UppP family.

The protein resides in the cell inner membrane. It carries out the reaction di-trans,octa-cis-undecaprenyl diphosphate + H2O = di-trans,octa-cis-undecaprenyl phosphate + phosphate + H(+). Catalyzes the dephosphorylation of undecaprenyl diphosphate (UPP). Confers resistance to bacitracin. The chain is Undecaprenyl-diphosphatase from Methylococcus capsulatus (strain ATCC 33009 / NCIMB 11132 / Bath).